Consider the following 786-residue polypeptide: LPS-assembly protein LptD (786 aa).

Residues 1–24 (MSFTSRSLLASFTGCLLYGTPAIA) form the signal peptide.

This sequence belongs to the LptD family. Component of the lipopolysaccharide transport and assembly complex. Interacts with LptE and LptA.

The protein localises to the cell outer membrane. Functionally, together with LptE, is involved in the assembly of lipopolysaccharide (LPS) at the surface of the outer membrane. This chain is LPS-assembly protein LptD, found in Aliivibrio fischeri (strain ATCC 700601 / ES114) (Vibrio fischeri).